The chain runs to 472 residues: Chromosomal replication initiator protein DnaA (472 aa).

Residues Met1–Glu73 form a domain I, interacts with DnaA modulators region. Positions Glu73–Ser128 are domain II. The segment at Pro90 to Ala124 is disordered. The segment covering Glu99–Ala109 has biased composition (basic and acidic residues). Polar residues predominate over residues Glu110 to Ser119. The domain III, AAA+ region stretch occupies residues Pro129 to Ser351. ATP-binding residues include Gly176, Gly178, Lys179, and Thr180. The segment at Lys352–Glu472 is domain IV, binds dsDNA.

Belongs to the DnaA family. In terms of assembly, oligomerizes as a right-handed, spiral filament on DNA at oriC.

The protein localises to the cytoplasm. Functionally, plays an essential role in the initiation and regulation of chromosomal replication. ATP-DnaA binds to the origin of replication (oriC) to initiate formation of the DNA replication initiation complex once per cell cycle. Binds the DnaA box (a 9 base pair repeat at the origin) and separates the double-stranded (ds)DNA. Forms a right-handed helical filament on oriC DNA; dsDNA binds to the exterior of the filament while single-stranded (ss)DNA is stabiized in the filament's interior. The ATP-DnaA-oriC complex binds and stabilizes one strand of the AT-rich DNA unwinding element (DUE), permitting loading of DNA polymerase. After initiation quickly degrades to an ADP-DnaA complex that is not apt for DNA replication. Binds acidic phospholipids. The sequence is that of Chromosomal replication initiator protein DnaA from Rhodopseudomonas palustris (strain ATCC BAA-98 / CGA009).